Consider the following 741-residue polypeptide: Zinc metalloproteinase nas-30 (741 aa).

Composition is skewed to low complexity over residues 71–85 (KPAPAAAGPRSAPAP) and 97–118 (PAPKAKARAAPTPRRAQADAPP). The interval 71–122 (KPAPAAAGPRSAPAPTNEDYNTDIDVPAPKAKARAAPTPRRAQADAPPVYRQ) is disordered. In terms of domain architecture, Peptidase M12A spans 324–516 (KVITGSVYRW…VKQVNRLYCN (193 aa)). 6 disulfide bridges follow: Cys-364–Cys-515, Cys-385–Cys-404, Cys-519–Cys-539, Cys-541–Cys-550, Cys-562–Cys-583, and Cys-610–Cys-630. Residue His-412 coordinates Zn(2+). The active site involves Glu-413. Zn(2+) contacts are provided by His-416 and His-422. An EGF-like domain is found at 539-550 (CKCPDGLGGKLC). One can recognise a CUB domain in the interval 550-648 (CGRAAKGTDH…ISDQSEALIL (99 aa)). The N-linked (GlcNAc...) asparagine glycan is linked to Asn-633.

It depends on Zn(2+) as a cofactor.

Its function is as follows. Metalloprotease. This chain is Zinc metalloproteinase nas-30, found in Caenorhabditis elegans.